The primary structure comprises 296 residues: MNMKKLATLVSAVALSATVSANAMAKDTIALVVSTLNNPFFVSLKDGAQKEADKLGYNLVVLDSQNNPAKELANVQDLTVRGTKILLINPTDSDAVGNAVKMANQANIPVITLDRQATKGEVVSHIASDNVLGGKIAGDYIAKKAGEGAKVIELQGIAGTSAARERGEGFQQAVAAHKFNVLASQPADFDRIKGLNVMQNLLTAHPDVQAVFAQNDEMALGALRALQTAGKSDVMVVGFDGTPDGEKAVNDGKLAATIAQLPDQIGAKGVETADKVLKGEKVQAKYPVDLKLVVKQ.

Positions 1–25 (MNMKKLATLVSAVALSATVSANAMA) are cleaved as a signal peptide.

This sequence belongs to the bacterial solute-binding protein 2 family. In terms of assembly, the complex is composed of an ATP-binding protein (RbsA), two transmembrane proteins (RbsC) and a solute-binding protein (RbsB).

The protein resides in the periplasm. In terms of biological role, part of the ABC transporter complex RbsABC involved in ribose import. Binds ribose. Also serves as the primary chemoreceptor for chemotaxis. The chain is Ribose import binding protein RbsB from Escherichia coli (strain K12).